The primary structure comprises 332 residues: Aspartate carbamoyltransferase catalytic subunit (332 aa).

Carbamoyl phosphate contacts are provided by R78 and T79. K106 serves as a coordination point for L-aspartate. Residues R128, H156, and Q159 each coordinate carbamoyl phosphate. Residues R189 and R243 each contribute to the L-aspartate site. Positions 284 and 285 each coordinate carbamoyl phosphate.

Belongs to the aspartate/ornithine carbamoyltransferase superfamily. ATCase family. In terms of assembly, heterododecamer (2C3:3R2) of six catalytic PyrB chains organized as two trimers (C3), and six regulatory PyrI chains organized as three dimers (R2).

It carries out the reaction carbamoyl phosphate + L-aspartate = N-carbamoyl-L-aspartate + phosphate + H(+). The protein operates within pyrimidine metabolism; UMP biosynthesis via de novo pathway; (S)-dihydroorotate from bicarbonate: step 2/3. Its function is as follows. Catalyzes the condensation of carbamoyl phosphate and aspartate to form carbamoyl aspartate and inorganic phosphate, the committed step in the de novo pyrimidine nucleotide biosynthesis pathway. In Caulobacter vibrioides (strain ATCC 19089 / CIP 103742 / CB 15) (Caulobacter crescentus), this protein is Aspartate carbamoyltransferase catalytic subunit.